The sequence spans 806 residues: Leucine--tRNA ligase (806 aa).

The 'HIGH' region motif lies at 38–48 (PYPSGEIHMGH). The 'KMSKS' region motif lies at 572-576 (KMSKS). Position 575 (lysine 575) interacts with ATP.

It belongs to the class-I aminoacyl-tRNA synthetase family.

Its subcellular location is the cytoplasm. The enzyme catalyses tRNA(Leu) + L-leucine + ATP = L-leucyl-tRNA(Leu) + AMP + diphosphate. In Helicobacter acinonychis (strain Sheeba), this protein is Leucine--tRNA ligase.